The sequence spans 743 residues: Phosphoribosylformylglycinamidine synthase subunit PurL (743 aa).

Residue H50 is part of the active site. ATP is bound by residues Y53 and K92. E94 contacts Mg(2+). Residues 95 to 98 (SHNH) and R117 each bind substrate. Catalysis depends on H96, which acts as the Proton acceptor. Mg(2+) is bound at residue D118. Q241 serves as a coordination point for substrate. D269 contacts Mg(2+). 313–315 (ESQ) provides a ligand contact to substrate. Residues D494 and G531 each contribute to the ATP site. N532 contacts Mg(2+). S534 serves as a coordination point for substrate.

This sequence belongs to the FGAMS family. In terms of assembly, monomer. Part of the FGAM synthase complex composed of 1 PurL, 1 PurQ and 2 PurS subunits.

It localises to the cytoplasm. The enzyme catalyses N(2)-formyl-N(1)-(5-phospho-beta-D-ribosyl)glycinamide + L-glutamine + ATP + H2O = 2-formamido-N(1)-(5-O-phospho-beta-D-ribosyl)acetamidine + L-glutamate + ADP + phosphate + H(+). The protein operates within purine metabolism; IMP biosynthesis via de novo pathway; 5-amino-1-(5-phospho-D-ribosyl)imidazole from N(2)-formyl-N(1)-(5-phospho-D-ribosyl)glycinamide: step 1/2. Functionally, part of the phosphoribosylformylglycinamidine synthase complex involved in the purines biosynthetic pathway. Catalyzes the ATP-dependent conversion of formylglycinamide ribonucleotide (FGAR) and glutamine to yield formylglycinamidine ribonucleotide (FGAM) and glutamate. The FGAM synthase complex is composed of three subunits. PurQ produces an ammonia molecule by converting glutamine to glutamate. PurL transfers the ammonia molecule to FGAR to form FGAM in an ATP-dependent manner. PurS interacts with PurQ and PurL and is thought to assist in the transfer of the ammonia molecule from PurQ to PurL. The chain is Phosphoribosylformylglycinamidine synthase subunit PurL from Mesorhizobium japonicum (strain LMG 29417 / CECT 9101 / MAFF 303099) (Mesorhizobium loti (strain MAFF 303099)).